The sequence spans 263 residues: Imidazole glycerol phosphate synthase subunit HisF (263 aa).

Residues D22 and D141 contribute to the active site.

The protein belongs to the HisA/HisF family. As to quaternary structure, heterodimer of HisH and HisF.

It localises to the cytoplasm. The enzyme catalyses 5-[(5-phospho-1-deoxy-D-ribulos-1-ylimino)methylamino]-1-(5-phospho-beta-D-ribosyl)imidazole-4-carboxamide + L-glutamine = D-erythro-1-(imidazol-4-yl)glycerol 3-phosphate + 5-amino-1-(5-phospho-beta-D-ribosyl)imidazole-4-carboxamide + L-glutamate + H(+). The protein operates within amino-acid biosynthesis; L-histidine biosynthesis; L-histidine from 5-phospho-alpha-D-ribose 1-diphosphate: step 5/9. Functionally, IGPS catalyzes the conversion of PRFAR and glutamine to IGP, AICAR and glutamate. The HisF subunit catalyzes the cyclization activity that produces IGP and AICAR from PRFAR using the ammonia provided by the HisH subunit. This chain is Imidazole glycerol phosphate synthase subunit HisF, found in Clavibacter michiganensis subsp. michiganensis (strain NCPPB 382).